A 497-amino-acid chain; its full sequence is DNA-dependent metalloprotease SPRTN (497 aa).

Position 1 is an N-acetylmethionine (Met1). Positions 46-213 (LQALFLQFND…KTCGGTYIKI (168 aa)) constitute a SprT-like domain. His112 serves as a coordination point for Zn(2+). Glu113 is an active-site residue. Residues His116 and His131 each coordinate Zn(2+). Lys231 is subject to N6-acetyllysine. The short motif at 254–262 (FSGKGYVLG) is the SHP-box element. Ser269 carries the phosphoserine modification. Lys304 participates in a covalent cross-link: Glycyl lysine isopeptide (Lys-Gly) (interchain with G-Cter in SUMO2). The PIP-box motif lies at 326-333 (QSVLSSYF). Lys342 is covalently cross-linked (Glycyl lysine isopeptide (Lys-Gly) (interchain with G-Cter in SUMO2); alternate). Residue Lys342 forms a Glycyl lysine isopeptide (Lys-Gly) (interchain with G-Cter in ubiquitin); alternate linkage. A disordered region spans residues 344 to 459 (FRNVNGSPVK…ASAPQSLSSQ (116 aa)). The segment covering 347–356 (VNGSPVKNGT) has biased composition (polar residues). A Glycyl lysine isopeptide (Lys-Gly) (interchain with G-Cter in SUMO2) cross-link involves residue Lys362. Residues 383 to 404 (TSKVTAPASATVTSAAGTSATI) show a composition bias toward low complexity. The residue at position 384 (Ser384) is a Phosphoserine. The short motif at 413–424 (DQFLNKRPRLED) is the Nuclear localization signal element. The segment covering 420–432 (PRLEDRTALDTIK) has biased composition (basic and acidic residues). Lys432 is covalently cross-linked (Glycyl lysine isopeptide (Lys-Gly) (interchain with G-Cter in SUMO2)). A compositionally biased stretch (low complexity) spans 442–459 (RSSSQPTAASAPQSLSSQ). The segment at 462 to 489 (LVNCPVCQGVVVESQINEHLDRCLEGNK) adopts a UBZ4-type zinc-finger fold. Residues Cys465, Cys468, His480, and Cys484 each contribute to the Zn(2+) site.

Belongs to the Spartan family. In terms of assembly, homodimer. Interacts (VIA PIP-box) with PCNA (when ubiquitinated). Interacts (via its SHP-box) with VCP/p97. Interacts with RAD18. Interacts with KCTD13 and POLD3. Zn(2+) is required as a cofactor. Autocatalytically cleaved in response to double-stranded DNA-binding: autocatalytic cleavage takes place in trans and leads to inactivation. In terms of processing, monoubiquitinated; monoubiquitination promotes exclusion from chromatin. Deubiquitinated by VCPIP1: deubiquitination is required for subsequent acetylation and recruitment to chromatin and DNA damage sites. Post-translationally, acetylated following deubiquitination by VCPIP1, leading to recruitment to chromatin and DNA damage sites. Phosphorylation by CHEK1 promotes recruitment to chromatin.

The protein localises to the nucleus. It is found in the chromosome. With respect to regulation, DNA-binding activates the protease activity: single-stranded DNA-binding specifically activates ability to cleave covalent DNA-protein cross-links (DPCs). In contrast, double-stranded DNA-binding specifically activates autocatalytic cleavage, and subsequent inactivation. DNA-dependent metalloendopeptidase that mediates the proteolytic cleavage of covalent DNA-protein cross-links (DPCs) during DNA synthesis, thereby playing a key role in maintaining genomic integrity. DPCs are highly toxic DNA lesions that interfere with essential chromatin transactions, such as replication and transcription, and which are induced by reactive agents, such as UV light or formaldehyde. Associates with the DNA replication machinery and specifically removes DPCs during DNA synthesis. Catalyzes proteolytic cleavage of the HMCES DNA-protein cross-link following unfolding by the BRIP1/FANCJ helicase. Acts as a pleiotropic protease for DNA-binding proteins cross-linked with DNA, such as TOP1, TOP2A, histones H3 and H4. Mediates degradation of DPCs that are not ubiquitinated, while it is not able to degrade ubiquitinated DPCs. SPRTN activation requires polymerase collision with DPCs followed by helicase bypass of DPCs. Involved in recruitment of VCP/p97 to sites of DNA damage. Also acts as an activator of CHEK1 during normal DNA replication by mediating proteolytic cleavage of CHEK1, thereby promoting CHEK1 removal from chromatin and subsequent activation. Does not activate CHEK1 in response to DNA damage. May also act as a 'reader' of ubiquitinated PCNA: recruited to sites of UV damage and interacts with ubiquitinated PCNA and RAD18, the E3 ubiquitin ligase that monoubiquitinates PCNA. Facilitates chromatin association of RAD18 and is required for efficient PCNA monoubiquitination, promoting a feed-forward loop to enhance PCNA ubiquitination and translesion DNA synthesis. The sequence is that of DNA-dependent metalloprotease SPRTN from Mus musculus (Mouse).